The chain runs to 415 residues: Serine hydroxymethyltransferase (415 aa).

(6S)-5,6,7,8-tetrahydrofolate contacts are provided by residues Leu118 and 122–124 (GHL). Lys227 is modified (N6-(pyridoxal phosphate)lysine).

Belongs to the SHMT family. Homodimer. Requires pyridoxal 5'-phosphate as cofactor.

The protein localises to the cytoplasm. It carries out the reaction (6R)-5,10-methylene-5,6,7,8-tetrahydrofolate + glycine + H2O = (6S)-5,6,7,8-tetrahydrofolate + L-serine. It functions in the pathway one-carbon metabolism; tetrahydrofolate interconversion. The protein operates within amino-acid biosynthesis; glycine biosynthesis; glycine from L-serine: step 1/1. Functionally, catalyzes the reversible interconversion of serine and glycine with tetrahydrofolate (THF) serving as the one-carbon carrier. This reaction serves as the major source of one-carbon groups required for the biosynthesis of purines, thymidylate, methionine, and other important biomolecules. Also exhibits THF-independent aldolase activity toward beta-hydroxyamino acids, producing glycine and aldehydes, via a retro-aldol mechanism. In Elusimicrobium minutum (strain Pei191), this protein is Serine hydroxymethyltransferase.